A 442-amino-acid chain; its full sequence is Trigger factor (442 aa).

The PPIase FKBP-type domain occupies 163–248; the sequence is GDQVVIDFLG…IKEVKAPKAA (86 aa).

This sequence belongs to the FKBP-type PPIase family. Tig subfamily.

The protein localises to the cytoplasm. It catalyses the reaction [protein]-peptidylproline (omega=180) = [protein]-peptidylproline (omega=0). Functionally, involved in protein export. Acts as a chaperone by maintaining the newly synthesized protein in an open conformation. Functions as a peptidyl-prolyl cis-trans isomerase. The protein is Trigger factor of Dinoroseobacter shibae (strain DSM 16493 / NCIMB 14021 / DFL 12).